A 974-amino-acid polypeptide reads, in one-letter code: Zinc finger protein 280D (974 aa).

Glycyl lysine isopeptide (Lys-Gly) (interchain with G-Cter in SUMO2) cross-links involve residues Lys44, Lys46, Lys86, Lys99, Lys138, Lys201, Lys222, Lys245, Lys287, and Lys304. A disordered region spans residues 188–216 (KRPSGSDISSVNPKKPKPSENTSGIDASS). 2 C2H2-type zinc fingers span residues 333–355 (FKCF…MKHH) and 370–393 (TTCQ…ESTH). Residues 400–424 (TICKICELSFETEQILLQHMKDNHK) form a C2H2-type 3; degenerate zinc finger. C2H2-type zinc fingers lie at residues 430–453 (YICQ…RTSH) and 459–481 (LLCP…YMKH). Disordered regions lie at residues 507–624 (TQHH…KVNT), 751–797 (IKTE…EGTG), and 815–974 (VTVS…EERS). Residues 539–557 (SGSSVTPSISPSTSTLQLS) are compositionally biased toward low complexity. Ser557 is subject to Phosphoserine. Over residues 571–587 (KLTTSTPNTTISDPSKA) the composition is skewed to polar residues. Low complexity predominate over residues 591 to 611 (KSNGSKSKNKSKVSNMQKKQS). Residues 612-624 (TLSSSNKKSKVNT) are compositionally biased toward polar residues. Residue Lys752 forms a Glycyl lysine isopeptide (Lys-Gly) (interchain with G-Cter in SUMO2) linkage. The span at 763–775 (VSKETARHSRAEG) shows a compositional bias: basic and acidic residues. The span at 817-829 (VSDTENVSSSKNI) shows a compositional bias: polar residues. Residues 830–860 (LSHDPDVGTDTMEKEEKTHHACQEMELKVDQ) show a composition bias toward basic and acidic residues. Residues 861–884 (SSESTNPTEAELSSETRQGLQLTS) show a composition bias toward polar residues. Phosphoserine occurs at positions 904 and 907. Positions 938–950 (SANTSDTVSDQTG) are enriched in polar residues.

The protein localises to the nucleus. In terms of biological role, may function as a transcription factor. This is Zinc finger protein 280D (Znf280d) from Mus musculus (Mouse).